The chain runs to 363 residues: Flagellar P-ring protein (363 aa).

The N-terminal stretch at M1 to A21 is a signal peptide.

It belongs to the FlgI family. In terms of assembly, the basal body constitutes a major portion of the flagellar organelle and consists of four rings (L,P,S, and M) mounted on a central rod.

It localises to the periplasm. It is found in the bacterial flagellum basal body. Assembles around the rod to form the L-ring and probably protects the motor/basal body from shearing forces during rotation. The protein is Flagellar P-ring protein of Colwellia psychrerythraea (strain 34H / ATCC BAA-681) (Vibrio psychroerythus).